A 688-amino-acid chain; its full sequence is Bifunctional protein GAL10 (688 aa).

The interval Met1–Ile346 is galactowaldenase. Tyr6–Leu37 is a binding site for NAD(+). The segment at Lys347–Leu688 is mutarotase. His525 functions as the For mutarotase activity in the catalytic mechanism.

In the N-terminal section; belongs to the NAD(P)-dependent epimerase/dehydratase family. The protein in the C-terminal section; belongs to the aldose epimerase family. Requires NAD(+) as cofactor.

The catalysed reaction is UDP-alpha-D-glucose = UDP-alpha-D-galactose. The enzyme catalyses alpha-D-glucose = beta-D-glucose. It functions in the pathway carbohydrate metabolism; galactose metabolism. Its pathway is carbohydrate metabolism; hexose metabolism. Functionally, mutarotase converts alpha-aldose to the beta-anomer. It is active on D-glucose, L-arabinose, D-xylose, D-galactose, maltose and lactose. This is Bifunctional protein GAL10 (GAL10) from Kluyveromyces lactis (strain ATCC 8585 / CBS 2359 / DSM 70799 / NBRC 1267 / NRRL Y-1140 / WM37) (Yeast).